The sequence spans 203 residues: tRNA (pseudouridine(54)-N(1))-methyltransferase (203 aa).

S-adenosyl-L-methionine contacts are provided by Leu-135 and Gly-156.

Belongs to the methyltransferase superfamily. TrmY family. In terms of assembly, homodimer.

It is found in the cytoplasm. It catalyses the reaction pseudouridine(54) in tRNA + S-adenosyl-L-methionine = N(1)-methylpseudouridine(54) in tRNA + S-adenosyl-L-homocysteine + H(+). Its function is as follows. Specifically catalyzes the N1-methylation of pseudouridine at position 54 (Psi54) in tRNAs. The chain is tRNA (pseudouridine(54)-N(1))-methyltransferase from Thermococcus onnurineus (strain NA1).